Consider the following 732-residue polypeptide: MEGGDQSEEEPRERSQAGGMGTLWSQESTPEERLPVEGSRPWAVARRVLTAILILGLLLCFSVLLFYNFQNCGPRPCETSVCLDLRDHYLASGNTSVAPCTDFFSFACGRAKETNNSFQELATKNKNRLRRILEVQNSWHPGSGEEKAFQFYNSCMDTLAIEAAGTGPLRQVIEELGGWRISGKWTSLNFNRTLRLLMSQYGHFPFFRAYLGPHPASPHTPVIQIDQPEFDVPLKQDQEQKIYAQIFREYLTYLNQLGTLLGGDPSKVQEHSSLSISITSRLFQFLRPLEQRRAQGKLFQMVTIDQLKEMAPAIDWLSCLQATFTPMSLSPSQSLVVHDVEYLKNMSQLVEEMLLKQRDFLQSHMILGLVVTLSPALDSQFQEARRKLSQKLRELTEQPPMPARPRWMKCVEETGTFFEPTLAALFVREAFGPSTRSAAMKLFTAIRDALITRLRNLPWMNEETQNMAQDKVAQLQVEMGASEWALKPELARQEYNDIQLGSSFLQSVLSCVRSLRARIVQSFLQPHPQHRWKVSPWDVNAYYSVSDHVVVFPAGLLQPPFFHPGYPRAVNFGAAGSIMAHELLHIFYQLLLPGGCLACDNHALQEAHLCLKRHYAAFPLPSRTSFNDSLTFLENAADVGGLAIALQAYSKRLLRHHGETVLPSLDLSPQQIFFRSYAQVMCRKPSPQDSHDTHSPPHLRVHGPLSSTPAFARYFRCARGALLNPSSRCQLW.

Positions 1-37 are disordered; that stretch reads MEGGDQSEEEPRERSQAGGMGTLWSQESTPEERLPVE. Residues 1–47 lie on the Cytoplasmic side of the membrane; sequence MEGGDQSEEEPRERSQAGGMGTLWSQESTPEERLPVEGSRPWAVARR. Residue Ser-7 is modified to Phosphoserine. Residues 48–67 traverse the membrane as a helical; Signal-anchor for type II membrane protein segment; sequence VLTAILILGLLLCFSVLLFY. At 68 to 732 the chain is on the extracellular side; it reads NFQNCGPRPC…LNPSSRCQLW (665 aa). Residues 76 to 732 enclose the Peptidase M13 domain; sequence PCETSVCLDL…LNPSSRCQLW (657 aa). A disulfide bridge connects residues Cys-77 and Cys-82. 2 N-linked (GlcNAc...) asparagine glycosylation sites follow: Asn-94 and Asn-115. 4 cysteine pairs are disulfide-bonded: Cys-100/Cys-717, Cys-108/Cys-682, Cys-155/Cys-410, and Cys-610/Cys-729. Asn-191 carries an N-linked (GlcNAc...) asparagine; in KEL2 antigen glycan. N-linked (GlcNAc...) asparagine glycosylation occurs at Asn-345. Zn(2+) is bound at residue His-581. The active site involves Glu-582. His-585 serves as a coordination point for Zn(2+). N-linked (GlcNAc...) asparagine glycosylation occurs at Asn-627. Glu-634 contributes to the Zn(2+) binding site. Asp-638 acts as the Proton donor in catalysis. Residues 684–703 form a disordered region; the sequence is KPSPQDSHDTHSPPHLRVHG.

It belongs to the peptidase M13 family. Heterodimer with XK; disulfide-linked. Zn(2+) is required as a cofactor. Post-translationally, N-glycosylated. In terms of tissue distribution, expressed at high levels in erythrocytes and testis (in Sertoli cells), and, at lower levels, in skeletal muscle, tonsils (in follicular dendritic cells), lymph node, spleen and appendix (at protein level). Also expressed in many adult and fetal nonerythroid tissues, including brain, spleen, lymph nodes and bone marrow.

Its subcellular location is the cell membrane. Functionally, zinc endopeptidase with endothelin-3-converting enzyme activity. Cleaves EDN1, EDN2 and EDN3, with a marked preference for EDN3. The polypeptide is Kell blood group glycoprotein (KEL) (Homo sapiens (Human)).